The primary structure comprises 458 residues: Transcription factor bHLH10 (458 aa).

The tract at residues 1–49 (MEEERESLYEEMGCFDPNTPAEVTVESSFSQAEPPPPPPQVLVAGSTSN) is disordered. The region spanning 243–292 (SRKSRTSPTERERRVHFNDRFFDLKNLIPNPTKIDRASIVGEAIDYIKEL) is the bHLH domain. Positions 315 to 338 (KRARVGEGGGGEDQEEEEDTVNYK) are disordered. The span at 324–334 (GGEDQEEEEDT) shows a compositional bias: acidic residues.

In terms of assembly, homodimer.

Its subcellular location is the nucleus. The sequence is that of Transcription factor bHLH10 (BHLH10) from Arabidopsis thaliana (Mouse-ear cress).